A 312-amino-acid chain; its full sequence is RNA binding protein fox-1 homolog 3 (312 aa).

A compositionally biased stretch (pro residues) spans 1-29 (MAQPYPPAQYPPPPQNGIPAEYAPPPPHP). Residues 1–104 (MAQPYPPAQY…KQQPKRLHVS (104 aa)) are disordered. A compositionally biased stretch (polar residues) spans 49–87 (TPAQTHPEQPGSEASTQPIAGTQTVPQTDEAAQTDSQPL). Positions 100-175 (RLHVSNIPFR…RKIEVNNATA (76 aa)) constitute an RRM domain. Position 223 is an asymmetric dimethylarginine; alternate (Arg223). Residue Arg223 is modified to Omega-N-methylarginine; alternate. Arg272 bears the Asymmetric dimethylarginine mark.

It localises to the nucleus. The protein localises to the cytoplasm. Functionally, pre-mRNA alternative splicing regulator. Regulates alternative splicing of RBFOX2 to enhance the production of mRNA species that are targeted for nonsense-mediated decay (NMD). The protein is RNA binding protein fox-1 homolog 3 (RBFOX3) of Homo sapiens (Human).